A 347-amino-acid polypeptide reads, in one-letter code: Metacaspase-2 (347 aa).

A propeptide spanning residues 1–55 (MCSLITQLCDAGQLADYVGLGWLNAVSSQPYLVQALGLQPPPRRVDVDAAFRDAK) is cleaved from the precursor. The interval 1 to 70 (MCSLITQLCD…QPWVATPLPG (70 aa)) is regulates substrate access to the active site. The active site involves His158. Ca(2+)-binding residues include Asp173, Asp189, and Asp190. Cys213 is a catalytic residue. Position 220 (Asp220) interacts with Ca(2+).

This sequence belongs to the peptidase C14B family. Monomer. Auto-proteolytic cleavage of the propeptide after Lys-55 and between the large and small subunits after Lys-268 is required for catalytic activity towards large protein substrates but is dispensable towards small oligopeptide substrates. After processing, the propeptide and the large and small subunits remain associated by non-covalent bonds. In vivo, the unprocessed enzyme appears to be the predominant form.

The protein resides in the recycling endosome. Its activity is regulated as follows. Activated by Ca(2+). In response to calcium binding, the 280-loop, a disordered loop consisting of residues 269-275, undergoes a conformational change which stabilizes substrates in the active site. The binding to the substrate triggers the release of the N-terminal region resulting in the activation of the enzyme. Proteolytic cleavage is required for catalytic activity towards large protein substrates. Cysteine protease that cleaves specifically after arginine or lysine residues. The sequence is that of Metacaspase-2 from Trypanosoma brucei brucei (strain 927/4 GUTat10.1).